The sequence spans 128 residues: AESSAMKFQRQHVDSEGSSSSNANYCNEMMVRRKMTQDRCKPVNTFVHEPLADVQAVCFQKNVPCKNGQTNCYQSYSSMHITDCRVTSNSKFPDCSYRTTQAQKSIVVACEGNLYVPVHFDASVEPST.

The tract at residues 1–23 is disordered; sequence AESSAMKFQRQHVDSEGSSSSNA. Substrate is bound by residues lysine 7 and arginine 10. Histidine 12 acts as the Proton acceptor in catalysis. 4 disulfides stabilise this stretch: cysteine 26-cysteine 84, cysteine 40-cysteine 95, cysteine 58-cysteine 110, and cysteine 65-cysteine 72. Substrate is bound by residues 41 to 45, lysine 66, and arginine 85; that span reads KPVNT. Histidine 119 serves as the catalytic Proton donor.

This sequence belongs to the pancreatic ribonuclease family. Monomer. Interacts with and forms tight 1:1 complexes with RNH1. Dimerization of two such complexes may occur. Interaction with RNH1 inhibits this protein. In terms of tissue distribution, pancreas.

It localises to the secreted. The enzyme catalyses an [RNA] containing cytidine + H2O = an [RNA]-3'-cytidine-3'-phosphate + a 5'-hydroxy-ribonucleotide-3'-[RNA].. It catalyses the reaction an [RNA] containing uridine + H2O = an [RNA]-3'-uridine-3'-phosphate + a 5'-hydroxy-ribonucleotide-3'-[RNA].. Functionally, endonuclease that catalyzes the cleavage of RNA on the 3' side of pyrimidine nucleotides. Acts on single-stranded and double-stranded RNA. The polypeptide is Ribonuclease pancreatic (RNASE1) (Hydrochoerus hydrochaeris (Capybara)).